The following is a 208-amino-acid chain: Ectodysplasin-A receptor-associated adapter protein (208 aa).

The span at 1-18 (MASPDDPLRSDHMAKEPV) shows a compositional bias: basic and acidic residues. Positions 1–99 (MASPDDPLRS…KGSCSCPSCS (99 aa)) are disordered. Polar residues predominate over residues 49 to 61 (TVNSNCPPNSDDQ). Residues 116–195 (DTIRIKLDPC…KILRRWVDEE (80 aa)) form the Death domain.

Binds EDAR. Self-associates and binds TRAF1, TRAF2 and TRAF3.

It localises to the cytoplasm. Functionally, adapter protein that interacts with EDAR DEATH domain and couples the receptor to EDA signaling pathway during morphogenesis of ectodermal organs. Mediates the activation of NF-kappa-B. The chain is Ectodysplasin-A receptor-associated adapter protein (Edaradd) from Mus musculus (Mouse).